A 282-amino-acid chain; its full sequence is MSLVTSLTYVLPHRLLSSLARALAYSKSPATKQWLIDTVTRKFGVDLSEAQEPDPRVYPTFNAFFTRALKPGARVPDADPQALLMPADGRISQLGPIENGRIFQAKGQSFTAAELLGDESAAVPFHNGLFATVYLSPKDYHRVHMPWSGTLRETVHVPGRLFSVGPDAVRNVPRLFARNERLVCHFDTDFGPMASVMVGALLVSGVETVWSGVEIPRYGDRITRKDYRGKGITLERFAEMARFNYGSTVIVLLPPGVAALEGGLAAESSVRLGQALARRQVA.

Residues D88, H144, and S247 each act as charge relay system; for autoendoproteolytic cleavage activity in the active site. The Schiff-base intermediate with substrate; via pyruvic acid; for decarboxylase activity role is filled by S247. A Pyruvic acid (Ser); by autocatalysis modification is found at S247.

This sequence belongs to the phosphatidylserine decarboxylase family. PSD-B subfamily. Prokaryotic type I sub-subfamily. As to quaternary structure, heterodimer of a large membrane-associated beta subunit and a small pyruvoyl-containing alpha subunit. Requires pyruvate as cofactor. Post-translationally, is synthesized initially as an inactive proenzyme. Formation of the active enzyme involves a self-maturation process in which the active site pyruvoyl group is generated from an internal serine residue via an autocatalytic post-translational modification. Two non-identical subunits are generated from the proenzyme in this reaction, and the pyruvate is formed at the N-terminus of the alpha chain, which is derived from the carboxyl end of the proenzyme. The autoendoproteolytic cleavage occurs by a canonical serine protease mechanism, in which the side chain hydroxyl group of the serine supplies its oxygen atom to form the C-terminus of the beta chain, while the remainder of the serine residue undergoes an oxidative deamination to produce ammonia and the pyruvoyl prosthetic group on the alpha chain. During this reaction, the Ser that is part of the protease active site of the proenzyme becomes the pyruvoyl prosthetic group, which constitutes an essential element of the active site of the mature decarboxylase.

The protein resides in the cell membrane. The catalysed reaction is a 1,2-diacyl-sn-glycero-3-phospho-L-serine + H(+) = a 1,2-diacyl-sn-glycero-3-phosphoethanolamine + CO2. Its pathway is phospholipid metabolism; phosphatidylethanolamine biosynthesis; phosphatidylethanolamine from CDP-diacylglycerol: step 2/2. Catalyzes the formation of phosphatidylethanolamine (PtdEtn) from phosphatidylserine (PtdSer). This Xanthomonas campestris pv. campestris (strain 8004) protein is Phosphatidylserine decarboxylase proenzyme.